A 450-amino-acid chain; its full sequence is Probable glycylpeptide N-tetradecanoyltransferase (450 aa).

The disordered stretch occupies residues 1 to 28 (MSHGHSHDGAPCGGHHGDDGAGGSRPSV). Positions 67, 68, 69, 200, 201, 202, 203, 209, 211, 212, and 213 each coordinate tetradecanoyl-CoA.

This sequence belongs to the NMT family.

Its subcellular location is the cytoplasm. It carries out the reaction N-terminal glycyl-[protein] + tetradecanoyl-CoA = N-tetradecanoylglycyl-[protein] + CoA + H(+). Adds a myristoyl group to the N-terminal glycine residue of certain cellular proteins. The sequence is that of Probable glycylpeptide N-tetradecanoyltransferase (nmt-1) from Caenorhabditis elegans.